The sequence spans 104 residues: MAAKIKKGDRVVVLAGKDKGKQGAVTQVLVKANRVLVQGVNLVQRHTKATQADPQGGIKSKEAALHVSNVAIVDSKGKPTRVGFKIEGDKKVRFAKTTGEVING.

It belongs to the universal ribosomal protein uL24 family. In terms of assembly, part of the 50S ribosomal subunit.

Functionally, one of two assembly initiator proteins, it binds directly to the 5'-end of the 23S rRNA, where it nucleates assembly of the 50S subunit. In terms of biological role, one of the proteins that surrounds the polypeptide exit tunnel on the outside of the subunit. The protein is Large ribosomal subunit protein uL24 of Caulobacter sp. (strain K31).